Reading from the N-terminus, the 715-residue chain is Fatty acid oxidation complex subunit alpha (715 aa).

The segment at Met1 to Ala190 is enoyl-CoA hydratase/isomerase. A substrate-binding site is contributed by Asp297. The segment at His312–Asn715 is 3-hydroxyacyl-CoA dehydrogenase. Residues Met325, Asp344, Val401–Glu403, Lys408, and Ser430 each bind NAD(+). The active-site For 3-hydroxyacyl-CoA dehydrogenase activity is the His451. NAD(+) is bound at residue Asn454. 2 residues coordinate substrate: Asn501 and Tyr660.

This sequence in the N-terminal section; belongs to the enoyl-CoA hydratase/isomerase family. In the C-terminal section; belongs to the 3-hydroxyacyl-CoA dehydrogenase family. Heterotetramer of two alpha chains (FadB) and two beta chains (FadA).

The catalysed reaction is a (3S)-3-hydroxyacyl-CoA + NAD(+) = a 3-oxoacyl-CoA + NADH + H(+). The enzyme catalyses a (3S)-3-hydroxyacyl-CoA = a (2E)-enoyl-CoA + H2O. It catalyses the reaction a 4-saturated-(3S)-3-hydroxyacyl-CoA = a (3E)-enoyl-CoA + H2O. It carries out the reaction (3S)-3-hydroxybutanoyl-CoA = (3R)-3-hydroxybutanoyl-CoA. The catalysed reaction is a (3Z)-enoyl-CoA = a 4-saturated (2E)-enoyl-CoA. The enzyme catalyses a (3E)-enoyl-CoA = a 4-saturated (2E)-enoyl-CoA. It participates in lipid metabolism; fatty acid beta-oxidation. In terms of biological role, involved in the aerobic and anaerobic degradation of long-chain fatty acids via beta-oxidation cycle. Catalyzes the formation of 3-oxoacyl-CoA from enoyl-CoA via L-3-hydroxyacyl-CoA. It can also use D-3-hydroxyacyl-CoA and cis-3-enoyl-CoA as substrate. The polypeptide is Fatty acid oxidation complex subunit alpha (Pseudomonas putida (strain ATCC 47054 / DSM 6125 / CFBP 8728 / NCIMB 11950 / KT2440)).